The chain runs to 530 residues: ATP synthase subunit alpha 3 (530 aa).

ATP is bound at residue 174 to 181 (GDRATGKT). Residues 507–522 (TASATAPPDPPAASAA) are compositionally biased toward low complexity. Residues 507 to 530 (TASATAPPDPPAASAAELPQPDSP) form a disordered region.

This sequence belongs to the ATPase alpha/beta chains family. In terms of assembly, F-type ATPases have 2 components, CF(1) - the catalytic core - and CF(0) - the membrane proton channel. CF(1) has five subunits: alpha(3), beta(3), gamma(1), delta(1), epsilon(1). CF(0) has three main subunits: a(1), b(2) and c(9-12). The alpha and beta chains form an alternating ring which encloses part of the gamma chain. CF(1) is attached to CF(0) by a central stalk formed by the gamma and epsilon chains, while a peripheral stalk is formed by the delta and b chains.

It is found in the cell inner membrane. It catalyses the reaction ATP + H2O + 4 H(+)(in) = ADP + phosphate + 5 H(+)(out). In terms of biological role, produces ATP from ADP in the presence of a proton gradient across the membrane. The alpha chain is a regulatory subunit. The chain is ATP synthase subunit alpha 3 from Paraburkholderia xenovorans (strain LB400).